An 89-amino-acid chain; its full sequence is Serine-rich and transmembrane domain-containing 2 (89 aa).

N-linked (GlcNAc...) asparagine glycosylation is present at asparagine 11. The chain crosses the membrane as a helical span at residues 38–58; the sequence is YVGLFLSLLAILLILLFTMLL.

The protein localises to the membrane. In Mus musculus (Mouse), this protein is Serine-rich and transmembrane domain-containing 2.